The primary structure comprises 355 residues: MKIRIDIPHHPYDIQIEKGCMAQAGQWLRELWQPQKVVIVTDNHVASLYAEKVKLSLEDAGFQVAVFDFLEGEERKNLTTVQKVYEFLVKQGLTRSDGIVALGGGVVGDLAGFVASTYMRGIHFVQIPTSLTAQVDSSIGGKTGVNTPFAKNMVGTFAQPDGVLIDPLVLETLGKRELIEGMGEVIKYGLIEDPELWALLTGLNGSVESILEHAETLIEHSCQVKRKMVVEDELDNGIRLYLNFGHTIGHAIEATAGYGKVMHGEAVAMGMVQISKIAEEKGLMPAGITQSITEMCQKFGLPVDYENWEVDKLYQALTHDKKARGNTLKLVLVPELGSATIHPVSLEEMKDYLVK.

Residues 71 to 76 (EGEERK), 105 to 109 (GVVGD), 129 to 130 (TS), Lys142, and Lys151 contribute to the NAD(+) site. 3 residues coordinate Zn(2+): Glu184, His246, and His263.

It belongs to the sugar phosphate cyclases superfamily. Dehydroquinate synthase family. It depends on NAD(+) as a cofactor. The cofactor is Co(2+). Requires Zn(2+) as cofactor.

It is found in the cytoplasm. The catalysed reaction is 7-phospho-2-dehydro-3-deoxy-D-arabino-heptonate = 3-dehydroquinate + phosphate. It participates in metabolic intermediate biosynthesis; chorismate biosynthesis; chorismate from D-erythrose 4-phosphate and phosphoenolpyruvate: step 2/7. Catalyzes the conversion of 3-deoxy-D-arabino-heptulosonate 7-phosphate (DAHP) to dehydroquinate (DHQ). This is 3-dehydroquinate synthase from Streptococcus pneumoniae (strain ATCC BAA-255 / R6).